Here is a 234-residue protein sequence, read N- to C-terminus: Ion-translocating oxidoreductase complex subunit E (234 aa).

The next 5 membrane-spanning stretches (helical) occupy residues 62 to 82 (LGLG…ISLF), 92 to 112 (IPIY…LMNA), 116 to 136 (TLYQ…IIIG), 151 to 171 (IWDG…LGAL), and 205 to 225 (SFLL…LLAI).

It belongs to the NqrDE/RnfAE family. As to quaternary structure, the complex is composed of six subunits: RnfA, RnfB, RnfC, RnfD, RnfE and RnfG.

It localises to the cell inner membrane. Its function is as follows. Part of a membrane-bound complex that couples electron transfer with translocation of ions across the membrane. The chain is Ion-translocating oxidoreductase complex subunit E from Haemophilus influenzae (strain PittGG).